We begin with the raw amino-acid sequence, 358 residues long: WAT1-related protein At3g28080 (358 aa).

Helical transmembrane passes span 12 to 32 (AVFLTAMLAGETSIVGLSTLF), 42 to 62 (IYPFLSYSYLLASLLLLPSLF), 81 to 101 (IGLLGFLGSMYVITGGIGIEY), 105 to 125 (TLASAIGNIVPALTFILAVIF), 137 to 157 (SVAKVMGTILSLIGAFVVIFY), 187 to 207 (WLIGGAILTIQGIFVSVSFIL), 219 to 239 (FTVSILYILCISIVTSMIGLV), 245 to 265 (PSIWIIHFDITLFTIVTTGII), 283 to 303 (LYLAIFKPLSILIAVVMGTIF), and 308 to 328 (LYLGCLIGGILITLGFYVVMW). Residues 27–155 (GLSTLFKVAT…LSLIGAFVVI (129 aa)) form the EamA domain.

The protein belongs to the drug/metabolite transporter (DMT) superfamily. Plant drug/metabolite exporter (P-DME) (TC 2.A.7.4) family.

The protein localises to the membrane. The sequence is that of WAT1-related protein At3g28080 from Arabidopsis thaliana (Mouse-ear cress).